The primary structure comprises 360 residues: Peptide chain release factor 1 (360 aa).

An N5-methylglutamine modification is found at glutamine 236. The disordered stretch occupies residues glutamine 288–isoleucine 308. Over residues alanine 293 to isoleucine 308 the composition is skewed to basic and acidic residues.

This sequence belongs to the prokaryotic/mitochondrial release factor family. In terms of processing, methylated by PrmC. Methylation increases the termination efficiency of RF1.

It localises to the cytoplasm. Its function is as follows. Peptide chain release factor 1 directs the termination of translation in response to the peptide chain termination codons UAG and UAA. The chain is Peptide chain release factor 1 from Streptococcus equi subsp. equi (strain 4047).